A 303-amino-acid chain; its full sequence is Probable cell division protein WhiA (303 aa).

The segment at residues 272–303 is a DNA-binding region (H-T-H motif); it reads SIQQVADALEFPITKSGVNHRLRKINKIADDL.

The protein belongs to the WhiA family.

Involved in cell division and chromosome segregation. The polypeptide is Probable cell division protein WhiA (Streptococcus pyogenes serotype M12 (strain MGAS2096)).